Reading from the N-terminus, the 253-residue chain is Sortase SrtE2 (253 aa).

Over residues 1 to 11 (MAATTDTEHQE) the composition is skewed to basic and acidic residues. Residues 1 to 23 (MAATTDTEHQEQAGTGGRGRRRP) are disordered. The chain crosses the membrane as a helical span at residues 30 to 50 (AVSVLGELLITAGLVMGLFVV). The interval 69-89 (EKVRDDWAQDRVGGSGQDGPG) is disordered. The active site involves Cys220.

This sequence belongs to the bacterial sortase family. Class E subfamily.

Its subcellular location is the cell membrane. It catalyses the reaction The enzyme catalyzes a cell wall sorting reaction in which a surface protein with a sorting signal containing a LPXTG motif is cleaved between the Thr and Gly residue. The resulting threonine carboxyl end of the protein is covalently attached to a pentaglycine cross-bridge of peptidoglycan.. In terms of biological role, transpeptidase that anchors surface proteins to the cell wall. Recognizes Leu-Ala-x-Thr-Gly and Leu-Pro-x-Thr-Gly, with a preference for the former. Unlike the S.aureus sortase it cleaves not only the Thr-Gly motif but also the Ala-X bond; an Ala-Glu bond is a better substrate than the Thr-Gly motif in vitro. Among its possible substrates are the chaplins ChpA, ChpB and ChpC; this enzyme is more important for ChpC attachment than is SrtE1. A double knockout mutant of srtE1 and srtE2 shows a developmental defect in aerial hyphae formation more dramatic than that due to chaplin deletion. In Streptomyces coelicolor (strain ATCC BAA-471 / A3(2) / M145), this protein is Sortase SrtE2.